Consider the following 404-residue polypeptide: Protein IQ-DOMAIN 12 (404 aa).

Residues F8–K25 form a calmodulin-binding region. Positions M11–E18 match the Nuclear localization signal 1 motif. IQ domains are found at residues N108–R135 and L136–S158. The Nuclear localization signal 2 motif lies at I226–K233.

It belongs to the IQD family. Binds to multiple calmodulin (CaM) in the presence of Ca(2+) and CaM-like proteins.

The protein resides in the nucleus. It is found in the cell membrane. In terms of biological role, may be involved in cooperative interactions with calmodulins or calmodulin-like proteins. Recruits calmodulin proteins to microtubules, thus being a potential scaffold in cellular signaling and trafficking. May associate with nucleic acids and regulate gene expression at the transcriptional or post-transcriptional level. This Arabidopsis thaliana (Mouse-ear cress) protein is Protein IQ-DOMAIN 12.